The primary structure comprises 948 residues: MNLGDGLKLETELLDGKTKLILSPYEHKSKISVKMGNKAKIAKCPLRTKTGHILKSTQDTCIGSEKLLQKKPVGSETSQAKGEKNGMTFSSTKDLCKQCIDKDCLHIQKEISPATPNMQKTRNTVNTSLVGKQKPHKKHITAENMKSSLVCLTQDQLQQILMTVNQGNRSLSLTENGKEAKSQYSLYLNSISNQPKDENIMGLFKKTEMVSSVPAENKSVLNEHQETSKQCEQKIAIENEWKPADIFSTLGERECDRSSLEAKKAQWRKELDEQVALKKKEKEVSEKWNDPWKKSESDKIIWEKHQILDQSRETVLLEHPFSAVKQELQRKWIEELNKQIEDDRQRKIEEKIIYSKGEEHDRWAMHFDSLKSYPGSQSQLFSQSTHKQPEYFCVSPDTQELADVSSVCTPTTGSQVEPSEEEHIAKPIKDVVMANSKKTNFLRSMTALLDPAQIEERDRRRQKQLEHQKAITAQVEEKRRKKQLEEEQRKKEEQEEELRLAQEREEMQKQYEEDILKQKQKEEIMTLKTNELFQTMQRAQELAQRLKQEQRIRELAQKGHDTSRLIKNLGVDTIQMEYNASNISNSRHDSDEISGKMNTYMNSTTSKKDTGVQTDDLNIGIFTNAESHCGSLMERDITNCSSPEISAELIGQFSTKKNKQELTQDKGASLEKENNRCNDQCNQFTRIEKQTKHMKKYPKRPDWNINKPPKRYIPASEKYPKQLQKQREEKKVRRQMELLHLVEKNNPGHLSQNRGISPEIFHSSHQETESKLRWHLVKKEEEPLNIHSFSKERSPSSPVPVVKNRTQQTQNTLHLPLKNSSYERENLISGSNQTELSSGISESSHFIPYVRTNEIYYLDPDAPLSGPSTQDPQYQNSQDCGQKRQLFDSDCVRDPLLNPNMVKNRDRQQAILKGLSELRQGLLQKQKELESSLLPLAENQEESFGSSF.

2 positions are modified to phosphothreonine: Thr-115 and Thr-121. Ser-369 carries the phosphoserine modification. The disordered stretch occupies residues 458 to 499 (DRRRQKQLEHQKAITAQVEEKRRKKQLEEEQRKKEEQEEELR). Residues 467 to 558 (HQKAITAQVE…EQRIRELAQK (92 aa)) adopt a coiled-coil conformation. The tract at residues 570–948 (GVDTIQMEYN…NQEESFGSSF (379 aa)) is mediates localization to cilia, centrosomes and spindle microtubules and the interaction with PCM1, CEP290, CEP104 and CSPP1. Ser-606 carries the phosphoserine modification. Disordered stretches follow at residues 690-713 (QTKH…KRYI) and 788-808 (SFSK…RTQQ).

In terms of assembly, homodimer; disulfide-linked. Interacts with CEP290. Interacts with PCM1. Interacts with ARMC9, TOGARAM1, CSPP1 and CEP104. Interacts with CDK5RAP2, CEP152, CEP192, TBG1 and PRC1. Widely expressed (at protein level). Expressed in retina, mainly in photoreceptors but also in outer plexiform and ganglion cell layers (at protein level).

The protein resides in the cytoplasm. It is found in the cytoskeleton. It localises to the microtubule organizing center. Its subcellular location is the centrosome. The protein localises to the centriolar satellite. The protein resides in the cell projection. It is found in the cilium. It localises to the cilium basal body. Its subcellular location is the cilium axoneme. The protein localises to the photoreceptor inner segment. The protein resides in the photoreceptor outer segment. It is found in the spindle. It localises to the midbody. Its function is as follows. Microtubule-binding protein required for ciliogenesis. May function in ciliogenesis by mediating the transport of proteins like BBS4 to the cilium, but also through the organization of the centriolar satellites. Required for the assembly of signaling-competent cilia with proper structure and length. Mediates this function in part by regulating transition zone assembly and basal body recruitment of the IFT-B complex. Cooperates with the ciliopathy proteins CSPP1 and CEP104 during cilium length regulation. Plays two important roles during cell division. First, is required for mitotic progression via regulation of spindle assembly, organization and orientation, levels of spindle microtubules (MTs), kinetochore-fiber integrity, and chromosome alignment. Second, functions during cytokinesis in part by regulating assembly and organization of central spindle and midbody MTs. Plays a role in retina morphogenesis and/or homeostasis. The protein is Coiled-coil domain-containing protein 66 of Homo sapiens (Human).